The sequence spans 187 residues: UPF0301 protein YqgE (187 aa).

Belongs to the UPF0301 (AlgH) family.

This is UPF0301 protein YqgE from Escherichia coli O7:K1 (strain IAI39 / ExPEC).